We begin with the raw amino-acid sequence, 163 residues long: ATP synthase subunit b 1 (163 aa).

The helical transmembrane segment at Ala-7 to Val-27 threads the bilayer.

Belongs to the ATPase B chain family. In terms of assembly, F-type ATPases have 2 components, F(1) - the catalytic core - and F(0) - the membrane proton channel. F(1) has five subunits: alpha(3), beta(3), gamma(1), delta(1), epsilon(1). F(0) has three main subunits: a(1), b(2) and c(10-14). The alpha and beta chains form an alternating ring which encloses part of the gamma chain. F(1) is attached to F(0) by a central stalk formed by the gamma and epsilon chains, while a peripheral stalk is formed by the delta and b chains.

It localises to the cell inner membrane. In terms of biological role, f(1)F(0) ATP synthase produces ATP from ADP in the presence of a proton or sodium gradient. F-type ATPases consist of two structural domains, F(1) containing the extramembraneous catalytic core and F(0) containing the membrane proton channel, linked together by a central stalk and a peripheral stalk. During catalysis, ATP synthesis in the catalytic domain of F(1) is coupled via a rotary mechanism of the central stalk subunits to proton translocation. Its function is as follows. Component of the F(0) channel, it forms part of the peripheral stalk, linking F(1) to F(0). The protein is ATP synthase subunit b 1 of Rhodopseudomonas palustris (strain HaA2).